Consider the following 445-residue polypeptide: Argininosuccinate synthase (445 aa).

ATP is bound by residues 17–25 (AFSGGLDTS) and alanine 43. Tyrosine 99 provides a ligand contact to L-citrulline. ATP is bound by residues glycine 129 and threonine 131. Positions 131, 135, and 136 each coordinate L-aspartate. Asparagine 135 contributes to the L-citrulline binding site. Residue aspartate 136 participates in ATP binding. Positions 139 and 192 each coordinate L-citrulline. Aspartate 194 serves as a coordination point for ATP. Residues threonine 201, glutamate 203, and glutamate 280 each coordinate L-citrulline.

Belongs to the argininosuccinate synthase family. Type 2 subfamily. In terms of assembly, homotetramer.

The protein resides in the cytoplasm. It catalyses the reaction L-citrulline + L-aspartate + ATP = 2-(N(omega)-L-arginino)succinate + AMP + diphosphate + H(+). The protein operates within amino-acid biosynthesis; L-arginine biosynthesis; L-arginine from L-ornithine and carbamoyl phosphate: step 2/3. The chain is Argininosuccinate synthase from Bordetella bronchiseptica (strain ATCC BAA-588 / NCTC 13252 / RB50) (Alcaligenes bronchisepticus).